A 606-amino-acid chain; its full sequence is Double-stranded RNA-binding protein Staufen homolog 2 (606 aa).

2 consecutive DRBM domains span residues 8 to 75 and 95 to 181; these read TPMC…ESSL and TPTV…ALKN. Disordered regions lie at residues 57-97 and 177-205; these read SIKK…ITPT and QALK…SDAS. Over residues 85–97 the composition is skewed to polar residues; that stretch reads ADSNSNPGSITPT. Residues 192 to 205 are compositionally biased toward basic and acidic residues; sequence SEEKKETEENSDAS. DRBM domains lie at 207–274, 307–375, and 493–557; these read SEIS…ELKK, NPIS…QLGY, and QPSQ…QLSE. Residues 580 to 606 form a disordered region; the sequence is RLAERTESKPTNSGTTAQDCKDSKAVV. Residues 588–597 show a composition bias toward polar residues; that stretch reads KPTNSGTTAQ.

RNA-binding protein required for the microtubule-dependent transport of RNAs within polarized cell types. In Danio rerio (Zebrafish), this protein is Double-stranded RNA-binding protein Staufen homolog 2 (stau2).